The following is an 80-amino-acid chain: NADH-ubiquinone oxidoreductase chain 5 (80 aa).

2 consecutive transmembrane segments (helical) span residues 4-24 (ISFL…LNFM) and 44-64 (IVMT…VLLI).

It belongs to the complex I subunit 5 family.

The protein localises to the mitochondrion inner membrane. It catalyses the reaction a ubiquinone + NADH + 5 H(+)(in) = a ubiquinol + NAD(+) + 4 H(+)(out). Core subunit of the mitochondrial membrane respiratory chain NADH dehydrogenase (Complex I) that is believed to belong to the minimal assembly required for catalysis. Complex I functions in the transfer of electrons from NADH to the respiratory chain. The immediate electron acceptor for the enzyme is believed to be ubiquinone. This Ceratitis capitata (Mediterranean fruit fly) protein is NADH-ubiquinone oxidoreductase chain 5 (ND5).